We begin with the raw amino-acid sequence, 543 residues long: Excitatory amino acid transporter 1 (543 aa).

Residues 1 to 47 lie on the Cytoplasmic side of the membrane; that stretch reads MTKSNGEEPRMGSRMERFQQGVRKRTLLAKKKVQNITKEDVKSYLFR. A helical membrane pass occupies residues 48-68; it reads NAFVLLTVSAVIVGTILGFAL. Residues 69 to 86 are Extracellular-facing; that stretch reads RPYKMSYREVKYFSFPGE. The helical transmembrane segment at 87 to 108 threads the bilayer; sequence LLMRMLQMLVLPLIISSLVTGM. Topologically, residues 109 to 122 are cytoplasmic; it reads AALDSKASGKMGMR. The helical transmembrane segment at 123–145 threads the bilayer; sequence AVVYYMTTTIIAVVIGIIIVIII. At 146–236 the chain is on the extracellular side; the sequence is HPGKGTKENM…IREEMVPVPG (91 aa). The helical transmembrane segment at 237 to 260 threads the bilayer; sequence SVNGVNALGLVVFSMCFGFVIGNM. The Cytoplasmic portion of the chain corresponds to 261–269; that stretch reads KEQGQALRE. Residues 270–297 form a helical membrane-spanning segment; that stretch reads FFDSLNEAIMRLVAVIMWYAPLGILFLI. The Extracellular segment spans residues 298–318; sequence AGKILEMEDMGVIGGQLAMYT. A helical transmembrane segment spans residues 319-340; the sequence is VTVIVGLLIHAVIVLPLLYFLV. Residues 341–345 lie on the Cytoplasmic side of the membrane; the sequence is TRKNP. Residues 346-376 constitute an intramembrane region (discontinuously helical); the sequence is WVFIGGLLQALITALGTSSSSATLPITFKCL. L-aspartate is bound at residue 363-365; the sequence is SSS. Residues 377–385 lie on the Cytoplasmic side of the membrane; the sequence is EENNGVDKR. A helical membrane pass occupies residues 386-412; the sequence is ITRFVLPVGATINMDGTALYEALAAIF. Na(+)-binding residues include Gly-394, Thr-396, and Asn-398. Position 402 (Thr-402) interacts with L-aspartate. At 413–425 the chain is on the extracellular side; sequence IAQVNNFDLNFGQ. Residues 426–459 constitute an intramembrane region (discontinuously helical); that stretch reads IITISITATAASIGAAGIPQAGLVTMVIVLTSVG. 443–447 contacts L-aspartate; that stretch reads IPQAG. Over 460 to 472 the chain is Extracellular; it reads LPTDDITLIIAVD. A helical transmembrane segment spans residues 473–494; the sequence is WFLDRLRTTTNVLGDSLGAGIV. Residues Asp-476 and Asn-483 each contribute to the L-aspartate site. Residues Asn-483 and Asp-487 each coordinate Na(+). The Cytoplasmic portion of the chain corresponds to 495-543; that stretch reads EHLSRHELKNRDVEMGNSVIEENEMKKPYQLIAQDNEPEKPVADSETKM. Ser-512 carries the post-translational modification Phosphoserine. A disordered region spans residues 522 to 543; the sequence is PYQLIAQDNEPEKPVADSETKM. The segment covering 531–543 has biased composition (basic and acidic residues); the sequence is EPEKPVADSETKM.

This sequence belongs to the dicarboxylate/amino acid:cation symporter (DAACS) (TC 2.A.23) family. SLC1A3 subfamily. Homotrimer. In terms of processing, glycosylated. In terms of tissue distribution, detected in brain and cerebellum. Both isoform GLAST-1 and GLAST-1A are expressed in bone and brain. In brain isoform GLAST-1 is highly enriched in the Purkinje cell layer in cerebellum.

It is found in the cell membrane. The catalysed reaction is K(+)(in) + L-glutamate(out) + 3 Na(+)(out) + H(+)(out) = K(+)(out) + L-glutamate(in) + 3 Na(+)(in) + H(+)(in). It catalyses the reaction K(+)(in) + L-aspartate(out) + 3 Na(+)(out) + H(+)(out) = K(+)(out) + L-aspartate(in) + 3 Na(+)(in) + H(+)(in). It carries out the reaction D-aspartate(out) + K(+)(in) + 3 Na(+)(out) + H(+)(out) = D-aspartate(in) + K(+)(out) + 3 Na(+)(in) + H(+)(in). Sodium-dependent, high-affinity amino acid transporter that mediates the uptake of L-glutamate and also L-aspartate and D-aspartate. Functions as a symporter that transports one amino acid molecule together with two or three Na(+) ions and one proton, in parallel with the counter-transport of one K(+) ion. Plays a redundant role in the rapid removal of released glutamate from the synaptic cleft, which is essential for terminating the postsynaptic action of glutamate. The sequence is that of Excitatory amino acid transporter 1 (Slc1a3) from Rattus norvegicus (Rat).